Reading from the N-terminus, the 239-residue chain is tRNA1(Val) (adenine(37)-N6)-methyltransferase (239 aa).

Belongs to the methyltransferase superfamily. tRNA (adenine-N(6)-)-methyltransferase family.

Its subcellular location is the cytoplasm. The catalysed reaction is adenosine(37) in tRNA1(Val) + S-adenosyl-L-methionine = N(6)-methyladenosine(37) in tRNA1(Val) + S-adenosyl-L-homocysteine + H(+). Functionally, specifically methylates the adenine in position 37 of tRNA(1)(Val) (anticodon cmo5UAC). This chain is tRNA1(Val) (adenine(37)-N6)-methyltransferase, found in Vibrio vulnificus (strain CMCP6).